A 288-amino-acid polypeptide reads, in one-letter code: 2-hydroxy-6-oxononadienedioate/2-hydroxy-6-oxononatrienedioate hydrolase (288 aa).

Histidine 267 (proton acceptor) is an active-site residue.

Belongs to the AB hydrolase superfamily. MhpC family. As to quaternary structure, homodimer.

It carries out the reaction (2Z,4E)-2-hydroxy-6-oxonona-2,4-dienedioate + H2O = (2Z)-2-hydroxypenta-2,4-dienoate + succinate + H(+). The enzyme catalyses (2Z,4E,7E)-2-hydroxy-6-oxonona-2,4,7-trienedioate + H2O = (2Z)-2-hydroxypenta-2,4-dienoate + fumarate + H(+). The protein operates within aromatic compound metabolism; 3-phenylpropanoate degradation. Its function is as follows. Catalyzes the cleavage of the C5-C6 bond of 2-hydroxy-6-oxononadienedioate and 2-hydroxy-6-oxononatrienedioate, a dienol ring fission product of the bacterial meta-cleavage pathway for degradation of phenylpropionic acid. This is 2-hydroxy-6-oxononadienedioate/2-hydroxy-6-oxononatrienedioate hydrolase from Escherichia coli (strain K12 / DH10B).